We begin with the raw amino-acid sequence, 549 residues long: MRSDNIKKGINRTSHRSLLRACGLDDNDMKKPFIGIANSYTDIVPGHIHLKDLVQEVKEVIRLEGGVPFEFDTMAVCDGIAMNHEGMYYSLPSREIIANTVESMAMAHQFDALILMPTCDKVVPGMIMAAARLNIPAIVITGGPMMPGKFHGETVDFINVTEAVGATQSGKMSEEDLYELERCACPGAGSCAGLFTANTMACLTETMGMSLPGCATAHAVSDKKVEIARASAKKIFTLLENDIKPSDILTQEAFENAIKVDLALGGSTNTTLHIPAIANEVDGVDVTIDLFDKLSHEVPYICSIRPGGNNRMIDVENAGGIPAVMKNMESILNTDCITCTSNSVKENLEKVSDIDYNVIHTLDDPIRTEGGIAVLYGNVAPNGCVIKQGAVNEDMLVHSGPCKVFNSEEECVLAIENDEIIDGDVVVIRYEGPKGGPGMREMLNPTAAIMGRELFHVALITDGRFSGGSRGPCIGHISPEAAEGGPIGAIENGDIVSINVKERTIKLELTDDEIKERLSKVKPVERNLKGWLKQYQKLATSADKGAILK.

Residue D78 coordinates Mg(2+). C119 lines the [2Fe-2S] cluster pocket. The Mg(2+) site is built by D120 and K121. The residue at position 121 (K121) is an N6-carboxylysine. C191 is a binding site for [2Fe-2S] cluster. Position 441 (E441) interacts with Mg(2+). The active-site Proton acceptor is the S466.

This sequence belongs to the IlvD/Edd family. As to quaternary structure, homodimer. Requires [2Fe-2S] cluster as cofactor. The cofactor is Mg(2+).

It carries out the reaction (2R)-2,3-dihydroxy-3-methylbutanoate = 3-methyl-2-oxobutanoate + H2O. The enzyme catalyses (2R,3R)-2,3-dihydroxy-3-methylpentanoate = (S)-3-methyl-2-oxopentanoate + H2O. It participates in amino-acid biosynthesis; L-isoleucine biosynthesis; L-isoleucine from 2-oxobutanoate: step 3/4. Its pathway is amino-acid biosynthesis; L-valine biosynthesis; L-valine from pyruvate: step 3/4. In terms of biological role, functions in the biosynthesis of branched-chain amino acids. Catalyzes the dehydration of (2R,3R)-2,3-dihydroxy-3-methylpentanoate (2,3-dihydroxy-3-methylvalerate) into 2-oxo-3-methylpentanoate (2-oxo-3-methylvalerate) and of (2R)-2,3-dihydroxy-3-methylbutanoate (2,3-dihydroxyisovalerate) into 2-oxo-3-methylbutanoate (2-oxoisovalerate), the penultimate precursor to L-isoleucine and L-valine, respectively. This is Dihydroxy-acid dehydratase from Methanosphaera stadtmanae (strain ATCC 43021 / DSM 3091 / JCM 11832 / MCB-3).